The following is a 160-amino-acid chain: Ribosomal RNA large subunit methyltransferase H (160 aa).

S-adenosyl-L-methionine is bound by residues Leu76 and Gly108.

This sequence belongs to the RNA methyltransferase RlmH family. As to quaternary structure, homodimer.

It localises to the cytoplasm. It carries out the reaction pseudouridine(1915) in 23S rRNA + S-adenosyl-L-methionine = N(3)-methylpseudouridine(1915) in 23S rRNA + S-adenosyl-L-homocysteine + H(+). In terms of biological role, specifically methylates the pseudouridine at position 1915 (m3Psi1915) in 23S rRNA. In Rhodopseudomonas palustris (strain ATCC BAA-98 / CGA009), this protein is Ribosomal RNA large subunit methyltransferase H.